Consider the following 179-residue polypeptide: Mediator of RNA polymerase II transcription subunit 29 (179 aa).

It belongs to the Mediator complex subunit 29 family. In terms of assembly, component of the Mediator complex.

It is found in the nucleus. Its function is as follows. Component of the Mediator complex, a coactivator involved in the regulated transcription of nearly all RNA polymerase II-dependent genes. Mediator functions as a bridge to convey information from gene-specific regulatory proteins to the basal RNA polymerase II transcription machinery. Mediator is recruited to promoters by direct interactions with regulatory proteins and serves as a scaffold for the assembly of a functional preinitiation complex with RNA polymerase II and the general transcription factors. The sequence is that of Mediator of RNA polymerase II transcription subunit 29 (med29) from Danio rerio (Zebrafish).